A 237-amino-acid chain; its full sequence is tRNA (guanine-N(7)-)-methyltransferase (237 aa).

The segment at 1-24 (MTAHKPGDPTTLNRLYGRSKGKPL) is disordered. Glutamate 62, glutamate 87, aspartate 119, and aspartate 141 together coordinate S-adenosyl-L-methionine. The active site involves aspartate 141. Substrate-binding positions include lysine 145, aspartate 177, and 216–219 (TRYE).

It belongs to the class I-like SAM-binding methyltransferase superfamily. TrmB family.

The catalysed reaction is guanosine(46) in tRNA + S-adenosyl-L-methionine = N(7)-methylguanosine(46) in tRNA + S-adenosyl-L-homocysteine. The protein operates within tRNA modification; N(7)-methylguanine-tRNA biosynthesis. Its function is as follows. Catalyzes the formation of N(7)-methylguanine at position 46 (m7G46) in tRNA. The chain is tRNA (guanine-N(7)-)-methyltransferase from Sphingopyxis alaskensis (strain DSM 13593 / LMG 18877 / RB2256) (Sphingomonas alaskensis).